Consider the following 629-residue polypeptide: EF-hand calcium-binding domain-containing protein 7 (629 aa).

The segment at 1 to 25 (MAISPRSDATFSSQKSTPSESPRTK) is disordered. Positions 7-21 (SDATFSSQKSTPSES) are enriched in polar residues. EF-hand domains follow at residues 102–137 (TSKA…RGEK) and 138–173 (MTRE…TNEQ). Residues 195–229 (NHIEGSPERDPSPVPKPSPKITRKTDPETFLNKGD) are disordered. Ser-200 and Ser-212 each carry phosphoserine. The EF-hand 3 domain occupies 403–438 (EFKSTLSDIFEVIDLDGNGLLSLEEYNFFELRTSGE). Ca(2+) is bound by residues Asp-416, Asp-418, Asn-420, and Glu-427.

Component of the EvC complex composed of EFCAB7, IQCE, EVC2 and EVC; built from two subcomplexes, EVC2:EVC and EFCAB7:IQCE. Interacts (via EF-hand 1 and 2) with IQCE (via N-terminus); this interaction anchors the EVC-EVC2 complex in a signaling microdomain at the base of cilia and stimulates the Hedgehog (Hh) pathway. Interacts with EVC2 (via N-terminal end). Interacts with EVC.

It localises to the cell projection. Its subcellular location is the cilium membrane. Functionally, component of the EvC complex that positively regulates ciliary Hedgehog (Hh) signaling. Required for the localization of the EVC2:EVC subcomplex at the base of primary cilia. This is EF-hand calcium-binding domain-containing protein 7 (EFCAB7) from Homo sapiens (Human).